Reading from the N-terminus, the 413-residue chain is Serine--tRNA ligase (413 aa).

221-223 (TAE) provides a ligand contact to L-serine. ATP is bound at residue 252–254 (RRE). Glu-275 provides a ligand contact to L-serine. 339–342 (EVSS) contacts ATP. Ser-375 contacts L-serine.

It belongs to the class-II aminoacyl-tRNA synthetase family. Type-1 seryl-tRNA synthetase subfamily. In terms of assembly, homodimer. The tRNA molecule binds across the dimer.

Its subcellular location is the cytoplasm. The enzyme catalyses tRNA(Ser) + L-serine + ATP = L-seryl-tRNA(Ser) + AMP + diphosphate + H(+). The catalysed reaction is tRNA(Sec) + L-serine + ATP = L-seryl-tRNA(Sec) + AMP + diphosphate + H(+). The protein operates within aminoacyl-tRNA biosynthesis; selenocysteinyl-tRNA(Sec) biosynthesis; L-seryl-tRNA(Sec) from L-serine and tRNA(Sec): step 1/1. Its function is as follows. Catalyzes the attachment of serine to tRNA(Ser). Is also able to aminoacylate tRNA(Sec) with serine, to form the misacylated tRNA L-seryl-tRNA(Sec), which will be further converted into selenocysteinyl-tRNA(Sec). This chain is Serine--tRNA ligase, found in Dehalococcoides mccartyi (strain ATCC BAA-2100 / JCM 16839 / KCTC 5957 / BAV1).